The sequence spans 329 residues: Porphobilinogen deaminase (329 aa).

Cysteine 250 is modified (S-(dipyrrolylmethanemethyl)cysteine).

The protein belongs to the HMBS family. In terms of assembly, monomer. The cofactor is dipyrromethane.

The enzyme catalyses 4 porphobilinogen + H2O = hydroxymethylbilane + 4 NH4(+). It participates in porphyrin-containing compound metabolism; protoporphyrin-IX biosynthesis; coproporphyrinogen-III from 5-aminolevulinate: step 2/4. Tetrapolymerization of the monopyrrole PBG into the hydroxymethylbilane pre-uroporphyrinogen in several discrete steps. The sequence is that of Porphobilinogen deaminase from Burkholderia mallei (strain NCTC 10247).